The following is a 120-amino-acid chain: Ribonuclease P protein component 2 (120 aa).

The protein belongs to the eukaryotic/archaeal RNase P protein component 2 family. As to quaternary structure, consists of a catalytic RNA component and at least 4-5 protein subunits.

Its subcellular location is the cytoplasm. It catalyses the reaction Endonucleolytic cleavage of RNA, removing 5'-extranucleotides from tRNA precursor.. Functionally, part of ribonuclease P, a protein complex that generates mature tRNA molecules by cleaving their 5'-ends. The protein is Ribonuclease P protein component 2 of Thermococcus gammatolerans (strain DSM 15229 / JCM 11827 / EJ3).